Here is a 252-residue protein sequence, read N- to C-terminus: tRNA-cytidine(32) 2-sulfurtransferase (252 aa).

Positions 37 to 42 (SGGKDS) match the PP-loop motif motif. 3 residues coordinate [4Fe-4S] cluster: C112, C115, and C202.

This sequence belongs to the TtcA family. In terms of assembly, homodimer. It depends on Mg(2+) as a cofactor. Requires [4Fe-4S] cluster as cofactor.

It localises to the cytoplasm. It catalyses the reaction cytidine(32) in tRNA + S-sulfanyl-L-cysteinyl-[cysteine desulfurase] + AH2 + ATP = 2-thiocytidine(32) in tRNA + L-cysteinyl-[cysteine desulfurase] + A + AMP + diphosphate + H(+). Its pathway is tRNA modification. In terms of biological role, catalyzes the ATP-dependent 2-thiolation of cytidine in position 32 of tRNA, to form 2-thiocytidine (s(2)C32). The sulfur atoms are provided by the cysteine/cysteine desulfurase (IscS) system. In Geotalea uraniireducens (strain Rf4) (Geobacter uraniireducens), this protein is tRNA-cytidine(32) 2-sulfurtransferase.